The primary structure comprises 436 residues: Chorion-specific transcription factor GCMa (436 aa).

A DNA-binding region (GCM) is located at residues 14-169 (LSWDINDVKL…KLEAEARRAM (156 aa)). Zn(2+) contacts are provided by C76, C82, C86, C113, C116, C125, H152, and H154. Residues 171–202 (KVNTAPSSVSLSLKGSTETRSLPGETQSQGSL) are disordered. The span at 174-202 (TAPSSVSLSLKGSTETRSLPGETQSQGSL) shows a compositional bias: polar residues.

In terms of processing, polyubiquitinated in the presence of UBE2D2 and FBXW2 (in vitro). As to expression, highly expressed in the placenta. Expressed in trophoblast cells of the villi.

The protein resides in the nucleus. Transcription factor involved in the control of expression of placental growth factor (PGF) and other placenta-specific genes. Binds to the trophoblast-specific element 2 (TSE2) of the aromatase gene enhancer. Binds to the SYDE1 promoter. Has a central role in mediating the differentiation of trophoblast cells along both the villous and extravillous pathways in placental development. The sequence is that of Chorion-specific transcription factor GCMa (GCM1) from Homo sapiens (Human).